The following is a 568-amino-acid chain: MNLSADQAPVTAVDELAPPSQPHRLSTSCDLHPEERFSGFCPSCLCDRLSVLDHNAAPPPSSSSRKPPSISAVSLKALFKPSSSGTNNSNGNGRVRPGFFPELRRTKSFSAKNNEGFSGGFEPQRRSCDVRLRDDERNLPINEAASVDKIEEEARESSVSEIVLEVTEEAEIEEDEENGEKDPGEIVEEKSSEIGEEEEELKPMKDYMDLYSQTKKPSVKDFAGSFFSAASVFSKKLQKWKQKQKVKKPRNGVGGGRPQSEIGVGRRSSDTDPRFSLDAGRFSVDIGRISMDDSRYSLDEPRASWDGHLIGRTTAARVPLPPSMLSVVENAPLNRSDMQIPSSPSIKPISGDSDPIIIIPGGSNQTRDYYTGPPSSRRRKSLDRSNSIRKIVTELEDVKSVSNSTTTIDSNSMETAENKGNQNGDKKSRRWGKWSILGFIYRKGKDDEEEDRYSRSNSAGMVERSLSESWPEMRNGEGGGPKMRRSNSNVSWRSSGGGSARNKSSRYSSKDGENGMLRFYLTPMRRSWKTSGGSGGGGGGGGGGGWEKTAAKANSHGHSIARRVMRLY.

Disordered regions lie at residues 1–27, 78–99, 168–203, 242–276, 360–428, 446–512, and 526–558; these read MNLS…RLST, LFKP…RPGF, EEAE…ELKP, QKQK…PRFS, PGGS…DKKS, DDEE…SKDG, and RSWK…SHGH. A compositionally biased stretch (low complexity) spans 82–93; the sequence is SSSGTNNSNGNG. Residues 168 to 179 are compositionally biased toward acidic residues; sequence EEAEIEEDEENG. Basic and acidic residues predominate over residues 180–193; that stretch reads EKDPGEIVEEKSSE. Phosphoserine is present on Ser-260. Polar residues predominate over residues 400–423; that stretch reads SVSNSTTTIDSNSMETAENKGNQN. Residues 532–546 are compositionally biased toward gly residues; that stretch reads GGSGGGGGGGGGGGW.

Belongs to the OCTOPUS family. Post-translationally, phosphorylation at Ser-260 amplifies the promotion of protophloem differentiation.

It localises to the cell membrane. The protein localises to the cytoplasm. Functionally, potentiates primary root protophloem differentiation. Regulates roots architecture. The sequence is that of Protein OCTOPUS-like from Arabidopsis thaliana (Mouse-ear cress).